A 767-amino-acid polypeptide reads, in one-letter code: Polyribonucleotide nucleotidyltransferase (767 aa).

Residues D488 and D494 each coordinate Mg(2+). The 60-residue stretch at 555-614 (PRLYTMKINPEKIRDVIGKGGSVIRALTEETGCQIDIGEDGTITIASTDADKAELAKKRI) folds into the KH domain. Residues 624–692 (GKVYEGPVVK…EKGRIKLSMK (69 aa)) form the S1 motif domain. Basic and acidic residues predominate over residues 700-742 (GMEFEERAPRREGGFGDRGDRGDRGPRRDRGGDRPERGERPAR). Residues 700 to 767 (GMEFEERAPR…QPQQQQGQQQ (68 aa)) form a disordered region. Over residues 752 to 767 (GAPAAGQPQQQQGQQQ) the composition is skewed to low complexity.

It belongs to the polyribonucleotide nucleotidyltransferase family. The cofactor is Mg(2+).

The protein resides in the cytoplasm. It carries out the reaction RNA(n+1) + phosphate = RNA(n) + a ribonucleoside 5'-diphosphate. Its function is as follows. Involved in mRNA degradation. Catalyzes the phosphorolysis of single-stranded polyribonucleotides processively in the 3'- to 5'-direction. The polypeptide is Polyribonucleotide nucleotidyltransferase (Leptothrix cholodnii (strain ATCC 51168 / LMG 8142 / SP-6) (Leptothrix discophora (strain SP-6))).